We begin with the raw amino-acid sequence, 397 residues long: uncharacterized protein (397 aa).

The next 12 helical transmembrane spans lie at 5–25, 43–63, 69–89, 92–112, 131–151, 157–177, 202–222, 233–253, 269–289, 293–313, 333–353, and 360–380; these read LKILVIGMFINVTGASFLWPL, LVLMLNSGASVAGNLCGGFLF, FKSIMLGIAITLASLMGLVFF, WPAYIVLLTIVGFGSGVVFPA, AIYVAQNAGVAVGSALGGVVA, YVFLANAVLYLIFFFIVYFGF, FAALIILSGGYVLGWLAYSQW, IGISLSLYSVLWTVNGILIVL, LKAQMVIGFIIFIVSFSMLLT, FPMFLAAMVILTIGEMLVWPA, FVNSAATGGRMIGPLFGGVLV, and ALVLSLLVLLLISIATTLLYD.

This sequence belongs to the major facilitator superfamily.

It localises to the cell membrane. This is an uncharacterized protein from Bacillus subtilis (strain 168).